Consider the following 350-residue polypeptide: UDP-3-O-acylglucosamine N-acyltransferase (350 aa).

The active-site Proton acceptor is His251.

It belongs to the transferase hexapeptide repeat family. LpxD subfamily. In terms of assembly, homotrimer.

The enzyme catalyses a UDP-3-O-[(3R)-3-hydroxyacyl]-alpha-D-glucosamine + a (3R)-hydroxyacyl-[ACP] = a UDP-2-N,3-O-bis[(3R)-3-hydroxyacyl]-alpha-D-glucosamine + holo-[ACP] + H(+). It functions in the pathway bacterial outer membrane biogenesis; LPS lipid A biosynthesis. In terms of biological role, catalyzes the N-acylation of UDP-3-O-acylglucosamine using 3-hydroxyacyl-ACP as the acyl donor. Is involved in the biosynthesis of lipid A, a phosphorylated glycolipid that anchors the lipopolysaccharide to the outer membrane of the cell. This Prochlorococcus marinus (strain NATL2A) protein is UDP-3-O-acylglucosamine N-acyltransferase.